We begin with the raw amino-acid sequence, 440 residues long: General transcription factor IIE subunit 1 (440 aa).

Ala-2 is modified (N-acetylalanine). The 91-residue stretch at 14 to 104 folds into the HTH TFE/IIEalpha-type domain; the sequence is LKRLAKYVIR…NYRTLVNVVK (91 aa). Residue Lys-67 is modified to N6-acetyllysine. Residues Cys-129, Cys-132, Cys-154, and Cys-157 each contribute to the Zn(2+) site. The segment at 129-157 adopts a C4-type zinc-finger fold; it reads CPVCCSTFTDLEANQLFDPMTGTFRCTFC. Ser-268 bears the Phosphoserine mark. Residues 333–353 are compositionally biased toward low complexity; sequence SSVTAGSVGAAAPVTAANGSD. The segment at 333–395 is disordered; the sequence is SSVTAGSVGA…EEFEEVADDP (63 aa). Composition is skewed to acidic residues over residues 354–364 and 381–393; these read SESETSESDDD and EDEE…EVAD.

Belongs to the TFIIE alpha subunit family. Tetramer of two alpha and two beta chains. Interacts with TAF6/TAFII80. Interacts with ATF7IP. Interacts with SND1. Part of TBP-based Pol II pre-initiation complex (PIC), in which Pol II core assembles with general transcription factors and other specific initiation factors including GTF2E1, GTF2E2, GTF2F1, GTF2F2, TCEA1, ERCC2, ERCC3, GTF2H2, GTF2H3, GTF2H4, GTF2H5, GTF2A1, GTF2A2, GTF2B and TBP; this large multi-subunit PIC complex mediates DNA unwinding and targets Pol II core to the transcription start site where the first phosphodiester bond forms.

It localises to the nucleus. Recruits TFIIH to the initiation complex and stimulates the RNA polymerase II C-terminal domain kinase and DNA-dependent ATPase activities of TFIIH. Both TFIIH and TFIIE are required for promoter clearance by RNA polymerase. In Mus musculus (Mouse), this protein is General transcription factor IIE subunit 1 (Gtf2e1).